A 430-amino-acid chain; its full sequence is Adenylosuccinate synthetase (430 aa).

Residues Gly-13–Lys-19 and Gly-41–Thr-43 contribute to the GTP site. Asp-14 functions as the Proton acceptor in the catalytic mechanism. Positions 14 and 41 each coordinate Mg(2+). Residues Asp-14 to Lys-17, Asn-39 to His-42, Thr-130, Arg-144, Gln-225, Thr-240, and Arg-304 each bind IMP. His-42 serves as the catalytic Proton donor. Ala-300–Arg-306 contributes to the substrate binding site. GTP-binding positions include Arg-306, Lys-332–Asp-334, and Ser-414–Gly-416.

Belongs to the adenylosuccinate synthetase family. As to quaternary structure, homodimer. Mg(2+) serves as cofactor.

The protein resides in the cytoplasm. The catalysed reaction is IMP + L-aspartate + GTP = N(6)-(1,2-dicarboxyethyl)-AMP + GDP + phosphate + 2 H(+). The protein operates within purine metabolism; AMP biosynthesis via de novo pathway; AMP from IMP: step 1/2. Functionally, plays an important role in the de novo pathway of purine nucleotide biosynthesis. Catalyzes the first committed step in the biosynthesis of AMP from IMP. The polypeptide is Adenylosuccinate synthetase (Pseudomonas paraeruginosa (strain DSM 24068 / PA7) (Pseudomonas aeruginosa (strain PA7))).